The sequence spans 847 residues: Glucans biosynthesis glucosyltransferase H (847 aa).

At 1 to 138 (MNKTTEYIDA…KWRTVGTIRR (138 aa)) the chain is on the cytoplasmic side. A helical transmembrane segment spans residues 139–156 (YILLILTLAQTVVATWYM). Residues 157 to 193 (KTILPYQGWALINPMDMVGQDIWVSFMQLLPYMLQTG) are Periplasmic-facing. The chain crosses the membrane as a helical span at residues 194–216 (ILILFAVLFCWVSAGFWTALMGF). The Cytoplasmic segment spans residues 217–511 (LQLLIGRDKY…LVKGMHPVHR (295 aa)). The chain crosses the membrane as a helical span at residues 512-534 (AVFLTGVMSYLSAPLWFMFLALS). Residues 535–567 (TALQVVHALTEPQYFLQPRQLFPVWPQWRPELA) lie on the Periplasmic side of the membrane. The helical transmembrane segment at 568 to 590 (IALFASTMVLLFLPKLLSIMLIW) threads the bilayer. Over 591–602 (CKGTKEYGGFWR) the chain is Cytoplasmic. The chain crosses the membrane as a helical span at residues 603-625 (VTLSLLLEVLFSVLLAPVRMLFH). Topologically, residues 626 to 679 (TVFVVSAFLGWEVVWNSPQRDDDSTPWGEAFMRHGSQLLLGLVWAVGMAWLDLR) are periplasmic. A helical transmembrane segment spans residues 680–702 (FLFWLAPIVFSLILSPFVSVISS). Over 703-847 (RSTVGLRTKR…ALQGRTSSAG (145 aa)) the chain is Cytoplasmic.

Belongs to the glycosyltransferase 2 family. OpgH subfamily.

It localises to the cell inner membrane. It participates in glycan metabolism; osmoregulated periplasmic glucan (OPG) biosynthesis. Functionally, involved in the biosynthesis of osmoregulated periplasmic glucans (OPGs). The sequence is that of Glucans biosynthesis glucosyltransferase H from Salmonella typhi.